A 536-amino-acid chain; its full sequence is Light-independent protochlorophyllide reductase subunit B (536 aa).

Asp36 contributes to the [4Fe-4S] cluster binding site. Asp274 acts as the Proton donor in catalysis. 409–410 is a binding site for substrate; sequence GL. Positions 426–448 are disordered; the sequence is DEAGPSHHGGKAVPASAPRADEA.

Belongs to the ChlB/BchB/BchZ family. In terms of assembly, protochlorophyllide reductase is composed of three subunits; BchL, BchN and BchB. Forms a heterotetramer of two BchB and two BchN subunits. It depends on [4Fe-4S] cluster as a cofactor.

It catalyses the reaction chlorophyllide a + oxidized 2[4Fe-4S]-[ferredoxin] + 2 ADP + 2 phosphate = protochlorophyllide a + reduced 2[4Fe-4S]-[ferredoxin] + 2 ATP + 2 H2O. It participates in porphyrin-containing compound metabolism; bacteriochlorophyll biosynthesis (light-independent). Its function is as follows. Component of the dark-operative protochlorophyllide reductase (DPOR) that uses Mg-ATP and reduced ferredoxin to reduce ring D of protochlorophyllide (Pchlide) to form chlorophyllide a (Chlide). This reaction is light-independent. The NB-protein (BchN-BchB) is the catalytic component of the complex. In Cereibacter sphaeroides (strain KD131 / KCTC 12085) (Rhodobacter sphaeroides), this protein is Light-independent protochlorophyllide reductase subunit B.